Reading from the N-terminus, the 361-residue chain is Peptide chain release factor 1 (361 aa).

Position 235 is an N5-methylglutamine (Gln-235). Residues 288–307 (AAEAQTRKLQVGSGDRSQRI) are disordered.

It belongs to the prokaryotic/mitochondrial release factor family. Post-translationally, methylated by PrmC. Methylation increases the termination efficiency of RF1.

Its subcellular location is the cytoplasm. In terms of biological role, peptide chain release factor 1 directs the termination of translation in response to the peptide chain termination codons UAG and UAA. The polypeptide is Peptide chain release factor 1 (Xanthomonas axonopodis pv. citri (strain 306)).